Consider the following 430-residue polypeptide: Glutamate-1-semialdehyde 2,1-aminomutase 2 (430 aa).

An N6-(pyridoxal phosphate)lysine modification is found at lysine 269.

The protein belongs to the class-III pyridoxal-phosphate-dependent aminotransferase family. HemL subfamily. Homodimer. Pyridoxal 5'-phosphate is required as a cofactor.

The protein localises to the cytoplasm. The catalysed reaction is (S)-4-amino-5-oxopentanoate = 5-aminolevulinate. It participates in porphyrin-containing compound metabolism; protoporphyrin-IX biosynthesis; 5-aminolevulinate from L-glutamyl-tRNA(Glu): step 2/2. This is Glutamate-1-semialdehyde 2,1-aminomutase 2 from Lysinibacillus sphaericus (strain C3-41).